The primary structure comprises 297 residues: Aspartate carbamoyltransferase catalytic subunit (297 aa).

The carbamoyl phosphate site is built by arginine 49 and threonine 50. Residue lysine 77 coordinates L-aspartate. Positions 99, 129, and 132 each coordinate carbamoyl phosphate. Residues arginine 162 and arginine 215 each contribute to the L-aspartate site. Residues glycine 256 and proline 257 each coordinate carbamoyl phosphate.

The protein belongs to the aspartate/ornithine carbamoyltransferase superfamily. ATCase family. Heterododecamer (2C3:3R2) of six catalytic PyrB chains organized as two trimers (C3), and six regulatory PyrI chains organized as three dimers (R2).

It carries out the reaction carbamoyl phosphate + L-aspartate = N-carbamoyl-L-aspartate + phosphate + H(+). It participates in pyrimidine metabolism; UMP biosynthesis via de novo pathway; (S)-dihydroorotate from bicarbonate: step 2/3. Catalyzes the condensation of carbamoyl phosphate and aspartate to form carbamoyl aspartate and inorganic phosphate, the committed step in the de novo pyrimidine nucleotide biosynthesis pathway. The chain is Aspartate carbamoyltransferase catalytic subunit from Legionella pneumophila subsp. pneumophila (strain Philadelphia 1 / ATCC 33152 / DSM 7513).